We begin with the raw amino-acid sequence, 674 residues long: Methionine--tRNA ligase (674 aa).

The 'HIGH' region motif lies at 11 to 21 (PYANGDLHLGH). Zn(2+) contacts are provided by cysteine 142, cysteine 145, cysteine 155, and cysteine 158. The 'KMSKS' region signature appears at 330-334 (KMSKS). Lysine 333 contacts ATP. The tRNA-binding domain occupies 574 to 674 (DFMKVDLRIA…EGAQPGMRVK (101 aa)).

It belongs to the class-I aminoacyl-tRNA synthetase family. MetG type 1 subfamily. Homodimer. Zn(2+) serves as cofactor.

It is found in the cytoplasm. The catalysed reaction is tRNA(Met) + L-methionine + ATP = L-methionyl-tRNA(Met) + AMP + diphosphate. Functionally, is required not only for elongation of protein synthesis but also for the initiation of all mRNA translation through initiator tRNA(fMet) aminoacylation. This chain is Methionine--tRNA ligase, found in Francisella tularensis subsp. tularensis (strain FSC 198).